A 1078-amino-acid chain; its full sequence is Phosphatidylinositol-3,5-bisphosphate 3-phosphatase MTMR4 (1078 aa).

The region spanning 154–571 (DHVKSRFQIE…RALQLWTAVY (418 aa)) is the Myotubularin phosphatase domain. Positions 267 to 290 (RMPNGNPSNKGNNDGSDNSDTDFD) are disordered. The span at 270 to 282 (NGNPSNKGNNDGS) shows a compositional bias: low complexity. The a 1,2-diacyl-sn-glycero-3-phospho-(1D-myo-inositol-3,5-bisphosphate) site is built by asparagine 321, asparagine 346, and isoleucine 347. A 1,2-diacyl-sn-glycero-3-phospho-(1D-myo-inositol-3-phosphate) contacts are provided by asparagine 321, asparagine 346, and isoleucine 347. The active-site Phosphocysteine intermediate is cysteine 408. A 1,2-diacyl-sn-glycero-3-phospho-(1D-myo-inositol-3,5-bisphosphate) contacts are provided by serine 409, aspartate 410, glycine 411, tryptophan 412, aspartate 413, arginine 414, lysine 450, and arginine 454. Residues serine 409, aspartate 410, glycine 411, tryptophan 412, aspartate 413, and arginine 414 each coordinate a 1,2-diacyl-sn-glycero-3-phospho-(1D-myo-inositol-3-phosphate). Arginine 454 serves as a coordination point for a 1,2-diacyl-sn-glycero-3-phospho-(1D-myo-inositol-3-phosphate). The span at 629 to 648 (SSDPNLNNHQGNLESCSSSK) shows a compositional bias: polar residues. Residues 629-694 (SSDPNLNNHQ…SGSATNQNNN (66 aa)) form a disordered region. Residues 904–935 (VQQRLRQMEASYKQEVDLLRRQVWELQLQLEI) adopt a coiled-coil conformation. Residues 960–982 (DGSDMDDLYSDKSEDRLSEASWE) form a disordered region. A compositionally biased stretch (basic and acidic residues) spans 968–982 (YSDKSEDRLSEASWE). The segment at 997-1057 (DHMASHCFNC…VCNTCYDHIQ (61 aa)) adopts an FYVE-type zinc-finger fold. The Zn(2+) site is built by cysteine 1003, cysteine 1006, cysteine 1019, cysteine 1022, cysteine 1027, cysteine 1030, cysteine 1049, and cysteine 1052.

The protein belongs to the protein-tyrosine phosphatase family. Non-receptor class myotubularin subfamily. In terms of assembly, homooligomeric.

It is found in the early endosome membrane. It localises to the recycling endosome membrane. Its subcellular location is the late endosome membrane. The protein localises to the cytoplasmic vesicle. The protein resides in the phagosome membrane. The catalysed reaction is a 1,2-diacyl-sn-glycero-3-phospho-(1D-myo-inositol-3-phosphate) + H2O = a 1,2-diacyl-sn-glycero-3-phospho-(1D-myo-inositol) + phosphate. The enzyme catalyses a 1,2-diacyl-sn-glycero-3-phospho-(1D-myo-inositol-3,5-bisphosphate) + H2O = a 1,2-diacyl-sn-glycero-3-phospho-(1D-myo-inositol-5-phosphate) + phosphate. It carries out the reaction 1,2-dioctanoyl-sn-glycero-3-phospho-(1-D-myo-inositol-3-phosphate) + H2O = 1,2-dioctanoyl-sn-glycero-3-phospho-(1D-myo-inositol) + phosphate. It catalyses the reaction 1,2-dioctanoyl-sn-glycero-3-phospho-(1D-myo-inositol-3,5-bisphosphate) + H2O = 1,2-dioctanoyl-sn-glycero-3-phospho-(1D-myo-inositol-5-phosphate) + phosphate. In terms of biological role, lipid phosphatase that specifically dephosphorylates the D-3 position of phosphatidylinositol 3-phosphate and phosphatidylinositol 3,5-bisphosphate, generating phosphatidylinositol and phosphatidylinositol 5-phosphate. Decreases the levels of phosphatidylinositol 3-phosphate, a phospholipid found in cell membranes where it acts as key regulator of both cell signaling and intracellular membrane traffic, in a subset of endosomal membranes to negatively regulate both endocytic recycling and trafficking and/or maturation of endosomes toward lysosomes. Through phosphatidylinositol 3-phosphate turnover in phagosome membranes regulates phagocytosis and phagosome maturation. By decreasing phosphatidylinositol 3-monophosphate (PI3P) levels in immune cells it can also regulate the innate immune response. Beside its lipid phosphatase activity, can also function as a molecular adapter to regulate midbody abscission during mitotic cytokinesis. Can also negatively regulate TGF-beta and BMP signaling through Smad proteins dephosphorylation and retention in endosomes. This chain is Phosphatidylinositol-3,5-bisphosphate 3-phosphatase MTMR4 (mtmr4), found in Xenopus laevis (African clawed frog).